A 196-amino-acid polypeptide reads, in one-letter code: Nucleoid occlusion factor SlmA (196 aa).

The HTH tetR-type domain maps to T7–I68. The segment at residues T31–F50 is a DNA-binding region (H-T-H motif). Residues E115–K142 are a coiled coil.

Belongs to the nucleoid occlusion factor SlmA family. As to quaternary structure, homodimer. Interacts with FtsZ.

It is found in the cytoplasm. The protein localises to the nucleoid. Its function is as follows. Required for nucleoid occlusion (NO) phenomenon, which prevents Z-ring formation and cell division over the nucleoid. Acts as a DNA-associated cell division inhibitor that binds simultaneously chromosomal DNA and FtsZ, and disrupts the assembly of FtsZ polymers. SlmA-DNA-binding sequences (SBS) are dispersed on non-Ter regions of the chromosome, preventing FtsZ polymerization at these regions. The chain is Nucleoid occlusion factor SlmA from Photobacterium profundum (strain SS9).